Here is a 2475-residue protein sequence, read N- to C-terminus: Non-reducing polyketide synthase ausA (2475 aa).

Positions 14–253 (VLFGSKYSEI…HHADHLSAAQ (240 aa)) are N-terminal acylcarrier protein transacylase domain (SAT). Residues 384 to 800 (SIPIAVTGLA…GSNAAIVLKE (417 aa)) enclose the Ketosynthase family 3 (KS3) domain. Residues cysteine 549, histidine 684, and histidine 723 each act as for beta-ketoacyl synthase activity in the active site. The tract at residues 910-1212 (LCFGGQTGNK…CPMDLSGPQA (303 aa)) is malonyl-CoA:ACP transacylase (MAT) domain. Serine 997 acts as the For acyl/malonyl transferase activity in catalysis. An N-terminal hotdog fold region spans residues 1279–1407 (EDLKLVQLLK…GTISLSPGAD (129 aa)). Positions 1279–1586 (EDLKLVQLLK…FTSVSIQSLR (308 aa)) constitute a PKS/mFAS DH domain. Positions 1282-1585 (KLVQLLKNEG…TFTSVSIQSL (304 aa)) are product template (PT) domain. The active-site Proton acceptor; for dehydratase activity is the histidine 1312. Residues 1435 to 1586 (SSSGLKRSTV…FTSVSIQSLR (152 aa)) are C-terminal hotdog fold. Catalysis depends on aspartate 1493, which acts as the Proton donor; for dehydratase activity. The Carrier domain occupies 1626–1703 (SSNGDDLRTV…ALVQRIFPGR (78 aa)). Serine 1663 carries the O-(pantetheine 4'-phosphoryl)serine modification. The tract at residues 1865–2098 (QHTSEHKLLH…GFNWVDWTDN (234 aa)) is methyltransferase (CMeT) domain. Residues 2127–2475 (SAIHEETVVY…YEFLRSHVGL (349 aa)) are thioesterase (TE) domain. Residues serine 2250, aspartate 2412, and histidine 2444 each act as for thioesterase activity in the active site.

The enzyme catalyses 3 malonyl-CoA + acetyl-CoA + 2 S-adenosyl-L-methionine = 3,5-dimethylorsellinate + 2 S-adenosyl-L-homocysteine + 3 CO2 + 4 CoA. Its pathway is secondary metabolite biosynthesis; terpenoid biosynthesis. Non-reducing polyketide synthase; part of the gene cluster A that mediates the biosynthesis of the fungal meroterpenoid acetoxydehydroaustin. The first step of the pathway is the synthesis of 3,5-dimethylorsellinic acid by the polyketide synthase ausA. 3,5-dimethylorsellinic acid is then prenylated by the polyprenyl transferase ausN. Further epoxidation by the FAD-dependent monooxygenase ausM and cyclization by the probable terpene cyclase ausL lead to the formation of protoaustinoid A. Protoaustinoid A is then oxidized to spiro-lactone preaustinoid A3 by the combined action of the FAD-binding monooxygenases ausB and ausC, and the dioxygenase ausE. Acid-catalyzed keto-rearrangement and ring contraction of the tetraketide portion of preaustinoid A3 by ausJ lead to the formation of preaustinoid A4. The aldo-keto reductase ausK, with the help of ausH, is involved in the next step by transforming preaustinoid A4 into isoaustinone which is in turn hydroxylated by the P450 monooxygenase ausI to form austinolide. The cytochrome P450 monooxygenase ausG then modifies austinolide to austinol. Austinol is further acetylated to austin by the O-acetyltransferase ausP, which spontaneously changes to dehydroaustin. The cytochrome P450 monooxygenase then converts dehydroaustin is into 7-dehydrodehydroaustin. The hydroxylation catalyzed by ausR permits the second O-acetyltransferase ausQ to add an additional acetyl group to the molecule, leading to the formation of acetoxydehydroaustin. Due to genetic rearrangements of the clusters and the subsequent loss of some enzymes, the end product of the Penicillium brasilianum austinoid biosynthesis clusters is acetoxydehydroaustin. The polypeptide is Non-reducing polyketide synthase ausA (Penicillium brasilianum).